A 1201-amino-acid polypeptide reads, in one-letter code: MLDVNNFEYMKIGLASPDKIRSWSHGEVKKPETINYRTLKPERDGLFCERIFGPMKDWECSCGKYKRVRYKGVVCDRCGVEVTKSKVRRERMGHIELAAPVSHIWYFKGIPSRMGLVMDMSPRALEEIIYFASYVVTEPGDTPLEKKQLLSEREYRVYREKYGKGFSAGMGAEAIKKILADIDLEKETNDLKEELKSAQGQRRTRAIRRLEVMEAFRNSGNNPSWMVLDVLPVIPPEIRPMVQLEGGRFATSDLNDLYRRVINRNNRLKRLLDLGAPNIIVQNEKRMLQEAVDALIDNGRRGRPVTGPGNRPLKSLSHMLKGKQGRFRQNLLGKRVDYSGRSVIVVGPNLKMYQCGLPKEMALELFKPFVMKELVGRGLAHNIKSAKRKIERMAPEIWDVLEEVIREHPVLLNRAPTLHRLGIQAFEPTLVEGRAIRLHPLVCTAYNADFDGDQMAVHVPLSAEAQAEARILMLAAQNILNPKDGKPVVTPSQDMVLGNYYLTLERENAVGEGTIFKDINEAQLAYQNGYVHLHSRIAVFAGSIPNERFTDEQRNQLLITTVGKLIFNTILPKSFPYINEPTKFNLEIETPAKYFVDTTTDVRAHIAAQELIDPFKKKILGNIIAEVFKKFHITETSKMLDRMKDLGFKISTKAGMTVGIADILTLEEKHEILEKAHDTVEKITKSFRRGLITDDERYERVIGVWNAAKDEIQGKLILSLDRLNPIFMMQDSGARGNISNFTQLAGMRGLMADPSGRIVELPITSNFREGLTVLEYFISTHGARKGLTDTALKTADSGYLTRRLVDVAQDVIIREDDCGTDRGLTIKAIREGTEIIEPLEERLEGRYSRKTIRHPETKEVIARENDLITEAIATQIVDAGIEEVTIRSAFTCNTKHGVCKKCYGKNLATGTEVEVGEAVGIIAAQSIGEPGTQLTMRTFHTGGVAGDDITQGLPRIQEIFEARNPKGQAIITEVGGEVVSIEEGRDRQQEITIQGTDDRRSYNIPYTARLRVEEGTIVERGEALTEGSVDPKALIRVRDVLSVQEYLLAEVQKVYRMQGVEIGDKHVEVMVRQMLRKIRVMDTGDTNILPGTLMDIHTFTEANRDAILSGSQPATGRPVLLGITKASLETDSFLSAASFQETTRVLTDAAIKGKRDELLGLKENVILGKLVPAGTGIGRYRKLKSEVIKETAEVTDEITNI.

Cys60, Cys62, Cys75, and Cys78 together coordinate Zn(2+). Asp449, Asp451, and Asp453 together coordinate Mg(2+). The Zn(2+) site is built by Cys818, Cys892, Cys899, and Cys902.

It belongs to the RNA polymerase beta' chain family. The RNAP catalytic core consists of 2 alpha, 1 beta, 1 beta' and 1 omega subunit. When a sigma factor is associated with the core the holoenzyme is formed, which can initiate transcription. Requires Mg(2+) as cofactor. Zn(2+) serves as cofactor.

The enzyme catalyses RNA(n) + a ribonucleoside 5'-triphosphate = RNA(n+1) + diphosphate. In terms of biological role, DNA-dependent RNA polymerase catalyzes the transcription of DNA into RNA using the four ribonucleoside triphosphates as substrates. This Listeria monocytogenes serotype 4b (strain F2365) protein is DNA-directed RNA polymerase subunit beta'.